A 218-amino-acid polypeptide reads, in one-letter code: Small ribosomal subunit protein uS5 (218 aa).

The tract at residues 1 to 45 (MPGRQRRDGGNGPAGQNSNGPEGRDNRRGGGDRRGGGDRRDNAAE) is disordered. Residues 22–45 (EGRDNRRGGGDRRGGGDRRDNAAE) show a composition bias toward basic and acidic residues. An S5 DRBM domain is found at 48 to 111 (QLERVVAINR…EEARKGFFRV (64 aa)).

This sequence belongs to the universal ribosomal protein uS5 family. Part of the 30S ribosomal subunit. Contacts proteins S4 and S8.

Its function is as follows. With S4 and S12 plays an important role in translational accuracy. Functionally, located at the back of the 30S subunit body where it stabilizes the conformation of the head with respect to the body. The chain is Small ribosomal subunit protein uS5 from Nocardia farcinica (strain IFM 10152).